Reading from the N-terminus, the 101-residue chain is Floral defensin-like protein 2 (101 aa).

Positions 1–25 (MARSICFFAVAILALMLFAAYETEA) are cleaved as a signal peptide. 5 cysteine pairs are disulfide-bonded: cysteine 28/cysteine 74, cysteine 32/cysteine 48, cysteine 39/cysteine 61, cysteine 45/cysteine 68, and cysteine 49/cysteine 70. The propeptide at 75-101 (ATEEATATLANEVKTMAEALVEEDMME) is removed in mature form.

Belongs to the DEFL family. In terms of processing, when compared to other plant defensins, the petunia defensins have an additional fifth disulfide bond. In terms of tissue distribution, petals.

The protein resides in the secreted. Its subcellular location is the vacuole. Plant defense peptide with antifungal activity against F.oxysporum and B.cinerea. This is Floral defensin-like protein 2 (D2) from Petunia hybrida (Petunia).